A 371-amino-acid chain; its full sequence is Neutral protease 2 homolog MGYG_03465 (371 aa).

Positions M1–A19 are cleaved as a signal peptide. Residues Y20 to R188 constitute a propeptide that is removed on maturation. Cystine bridges form between C196/C267 and C274/C292. H316 provides a ligand contact to Zn(2+). Residue E317 is part of the active site. Residues H320 and D331 each coordinate Zn(2+).

Belongs to the peptidase M35 family. Requires Zn(2+) as cofactor.

It localises to the secreted. The enzyme catalyses Preferential cleavage of bonds with hydrophobic residues in P1'. Also 3-Asn-|-Gln-4 and 8-Gly-|-Ser-9 bonds in insulin B chain.. In terms of biological role, secreted metalloproteinase that allows assimilation of proteinaceous substrates. Shows high activities on basic nuclear substrates such as histone and protamine. May be involved in virulence. This Arthroderma gypseum (strain ATCC MYA-4604 / CBS 118893) (Microsporum gypseum) protein is Neutral protease 2 homolog MGYG_03465.